Here is a 277-residue protein sequence, read N- to C-terminus: uncharacterized protein (277 aa).

This is an uncharacterized protein from Methanocaldococcus jannaschii (strain ATCC 43067 / DSM 2661 / JAL-1 / JCM 10045 / NBRC 100440) (Methanococcus jannaschii).